The following is a 198-amino-acid chain: Adenine phosphoribosyltransferase (198 aa).

The protein belongs to the purine/pyrimidine phosphoribosyltransferase family. As to quaternary structure, homodimer.

The protein resides in the cytoplasm. It catalyses the reaction AMP + diphosphate = 5-phospho-alpha-D-ribose 1-diphosphate + adenine. The protein operates within purine metabolism; AMP biosynthesis via salvage pathway; AMP from adenine: step 1/1. Its function is as follows. Catalyzes a salvage reaction resulting in the formation of AMP, that is energically less costly than de novo synthesis. This chain is Adenine phosphoribosyltransferase, found in Serratia proteamaculans (strain 568).